The chain runs to 443 residues: Probable D-serine dehydratase (443 aa).

N6-(pyridoxal phosphate)lysine is present on lysine 118.

It belongs to the serine/threonine dehydratase family. DsdA subfamily. It depends on pyridoxal 5'-phosphate as a cofactor.

The enzyme catalyses D-serine = pyruvate + NH4(+). The chain is Probable D-serine dehydratase from Vibrio parahaemolyticus serotype O3:K6 (strain RIMD 2210633).